Reading from the N-terminus, the 898-residue chain is MEAAEKEEISVEDEAVDKTIFKDCGKIAFYRRQKQQLTKTTTYQALLGSVDTEQDSTRFQIISEATKIPLVAEVYGIEKDIFRLKINEETPLKPRLVCSGDTGSLILTNRKGDLKCHVSANPFKIDLLSKNEAVISINSLGQLYFEHLQVPHKQRATKGNGQNTPAATSQENQEDLGLWEEKFGKFVDVKANGPSSVGLDFSLHGFEHLYGIPQHAESHQLKNTRDGDAYRLYNLDVYGYQVHDKMGIYGSVPYLLAHKQGRTVGIFWLNASETLVEINTEPAVEYTLTQMGPAAAKPKVRCRTDVHWMSESGIIDVFLLTGPTPADVFKQYSYITGTQAMPPLFSLGYHQCRWNYEDEQDVKAVDAGFDEHDIPYDVMWLDIEHTEDKKYFTWDKKRFANPKRMQELLRSKKRKLVVISDPHIKVDPDYTVYAQAKEQGFFVKNPEGGDFEGVCWPGLSSYLDFTNPKVREWYSSLFAFPVYQGSTDILFLWNDMNEPSVFRGPELTMHKSAVHYGDWEHRELHNIYGFYQQMATAEGLIQRSKGKERPFVLSRSFFAGSQKYGAVWTGDNKAEWSYLKISIPMLLTLSVSGISFCGADVGGFIGNPEAELLVRWYQAGAYQPFFRGHATMNTKRREPWLFGEEYTQLIREAIRQRYALLPYLYSLFYHTHVSSQPVMRPLWVEYPDDLETFAVEDEYMLGSALLVHPVTDPQTATIDVFLPGSDEVWYDSKTFAYWKGGCTVKIPVTLDTIPVFQRGGSVVPVKTTVGTSTGWMADSPYELRVALSTQGSAVGELYLDDGHSFQYLHQNQFLYRKFLFCSSVLTNRCANEKGHYPSKCIVEQILVLGLKKKPSSVTTHLSDGRAQPAAFTYCAETSALRLEKLSLRIGEDWEVRVG.

A disordered region spans residues 154 to 173 (QRATKGNGQNTPAATSQENQ). Residues 157-171 (TKGNGQNTPAATSQE) show a composition bias toward polar residues. The Nucleophile role is filled by D495. The active site involves E498. D571 acts as the Proton donor in catalysis.

Belongs to the glycosyl hydrolase 31 family.

It carries out the reaction Hydrolysis of terminal, non-reducing (1-&gt;4)-linked alpha-D-glucose residues with release of alpha-D-glucose.. In terms of biological role, has alpha-glucosidase activity. The protein is Neutral alpha-glucosidase C (Ganc) of Mus musculus (Mouse).